The sequence spans 689 residues: Glycine--tRNA ligase beta subunit (689 aa).

Belongs to the class-II aminoacyl-tRNA synthetase family. As to quaternary structure, tetramer of two alpha and two beta subunits.

It is found in the cytoplasm. The enzyme catalyses tRNA(Gly) + glycine + ATP = glycyl-tRNA(Gly) + AMP + diphosphate. This Actinobacillus succinogenes (strain ATCC 55618 / DSM 22257 / CCUG 43843 / 130Z) protein is Glycine--tRNA ligase beta subunit.